We begin with the raw amino-acid sequence, 95 residues long: Small ubiquitin-related modifier 2 (95 aa).

A Glycyl lysine isopeptide (Lys-Gly) (interchain with G-Cter in SUMO) cross-link involves residue lysine 11. Positions aspartate 16–phenylalanine 95 constitute a Ubiquitin-like domain. Glycine 93 participates in a covalent cross-link: Glycyl lysine isopeptide (Gly-Lys) (interchain with K-? in acceptor proteins). Positions serine 94–phenylalanine 95 are excised as a propeptide.

It belongs to the ubiquitin family. SUMO subfamily. As to quaternary structure, interacts with sae2 and ube2i. Covalently attached to a number of proteins, including top2. In terms of processing, polymeric chains can be formed through Lys-11 cross-linking. Post-translationally, cleavage of precursor form by a sentrin-specific protease is necessary for function.

The protein resides in the nucleus. Its function is as follows. Ubiquitin-like protein that can be covalently attached to proteins as a monomer or as a lysine-linked polymer. Covalent attachment via an isopeptide bond to its substrates requires prior activation by the E1 complex sae1-sae2 and linkage to the E2 enzyme ube2i, and can be promoted by an E3 ligase such as pias1-4. This post-translational modification on lysine residues of proteins plays a crucial role in a number of cellular processes such as nuclear transport, DNA replication and repair, mitosis and signal transduction. Polymeric sumo2 chains are also susceptible to polyubiquitination which functions as a signal for proteasomal degradation of modified proteins. The chain is Small ubiquitin-related modifier 2 (sumo2) from Xenopus tropicalis (Western clawed frog).